A 182-amino-acid chain; its full sequence is MEMVVLVDHAGDPIGVQSKADVHGQSTPRHLAFSCHVVDEQGRLLVTRRALKKRTWPGVWTNSFCGHPAPGETLEDAVSRRAEFELGLSIDHITCAIPNFSYVARDASGIEENEHCPVFIARAVSSLTPNPAEVAEAQWTSSSELKSAIDAAPWAFSPWLVEHFTELQPLIAEHIVEAEDDD.

2 residues coordinate Mn(2+): histidine 23 and histidine 30. A Nudix hydrolase domain is found at 28–162 (PRHLAFSCHV…PWAFSPWLVE (135 aa)). Residue cysteine 65 is part of the active site. Position 65 (cysteine 65) interacts with Mg(2+). A Mn(2+)-binding site is contributed by histidine 67. Position 85 (glutamate 85) interacts with Mg(2+). The Mn(2+) site is built by glutamate 112 and glutamate 114. Glutamate 114 is a catalytic residue.

It belongs to the IPP isomerase type 1 family. Mg(2+) serves as cofactor. Requires Mn(2+) as cofactor.

The protein localises to the cytoplasm. The enzyme catalyses isopentenyl diphosphate = dimethylallyl diphosphate. It functions in the pathway isoprenoid biosynthesis; dimethylallyl diphosphate biosynthesis; dimethylallyl diphosphate from isopentenyl diphosphate: step 1/1. Its function is as follows. Catalyzes the 1,3-allylic rearrangement of the homoallylic substrate isopentenyl (IPP) to its highly electrophilic allylic isomer, dimethylallyl diphosphate (DMAPP). The sequence is that of Isopentenyl-diphosphate Delta-isomerase from Brevibacterium linens.